Reading from the N-terminus, the 108-residue chain is Peptidyl-prolyl cis-trans isomerase FKBP1C (108 aa).

The PPIase FKBP-type domain occupies 20–108 (SQTCVMHYTG…VFDVELLKLE (89 aa)).

It belongs to the FKBP-type PPIase family. FKBP1 subfamily.

It catalyses the reaction [protein]-peptidylproline (omega=180) = [protein]-peptidylproline (omega=0). In terms of biological role, catalyzes the cis-trans isomerization of proline imidic peptide bonds in oligopeptides. The polypeptide is Peptidyl-prolyl cis-trans isomerase FKBP1C (Homo sapiens (Human)).